A 171-amino-acid polypeptide reads, in one-letter code: S-ribosylhomocysteine lyase (171 aa).

Residues histidine 54, histidine 58, and cysteine 128 each coordinate Fe cation.

This sequence belongs to the LuxS family. Homodimer. Fe cation is required as a cofactor.

The enzyme catalyses S-(5-deoxy-D-ribos-5-yl)-L-homocysteine = (S)-4,5-dihydroxypentane-2,3-dione + L-homocysteine. Functionally, involved in the synthesis of autoinducer 2 (AI-2) which is secreted by bacteria and is used to communicate both the cell density and the metabolic potential of the environment. The regulation of gene expression in response to changes in cell density is called quorum sensing. Catalyzes the transformation of S-ribosylhomocysteine (RHC) to homocysteine (HC) and 4,5-dihydroxy-2,3-pentadione (DPD). The polypeptide is S-ribosylhomocysteine lyase (Cronobacter sakazakii (strain ATCC BAA-894) (Enterobacter sakazakii)).